The following is a 735-amino-acid chain: Probable E3 ubiquitin-protein ligase MID2 (735 aa).

The RING-type zinc-finger motif lies at 30 to 80 (CPICLELFEDPLLLPCAHSLCFSCAHRILVSSCSSGESIEPITAFQCPTCR). The B box-type 1; degenerate zinc-finger motif lies at 137-184 (IACQFCEQDPPRDAVKTCITCEVSYCDRCLRATHPNKKPFTSHRLVEP). The B box-type 2 zinc-finger motif lies at 190-232 (LRGITCLDHENEKVNMYCVSDDQLICALCKLVGRHRDHQVASL). Positions 195, 198, 218, and 224 each coordinate Zn(2+). Positions 233–301 (NDRFEKLKQT…IIQQRKQMIA (69 aa)) form a coiled coil. Residues 340–399 (LKENDQARFLQSAKNIAERVAMATASSQVLIPDINFNDAFENFALDFSREKKLLEGLDYL) enclose the COS domain. The Fibronectin type-III domain maps to 398–531 (YLTAPNPPSI…RNSEPTRLKT (134 aa)). The 194-residue stretch at 516–709 (INQAGSRNSE…ILSGLPAPDF (194 aa)) folds into the B30.2/SPRY domain.

It belongs to the TRIM/RBCC family. As to quaternary structure, homodimer or heterodimer with MID1. Interacts with IGBP1. In terms of processing, phosphorylated on serine and threonine residues. Low level in fetal kidney and lung, and in adult prostate, ovary and small intestine.

Its subcellular location is the cytoplasm. The protein localises to the cytoskeleton. The enzyme catalyses S-ubiquitinyl-[E2 ubiquitin-conjugating enzyme]-L-cysteine + [acceptor protein]-L-lysine = [E2 ubiquitin-conjugating enzyme]-L-cysteine + N(6)-ubiquitinyl-[acceptor protein]-L-lysine.. It functions in the pathway protein modification; protein ubiquitination. Functionally, E3 ubiquitin ligase that plays a role in microtubule stabilization. Mediates the 'Lys-48'-linked polyubiquitination of LRRK2 to drive its localization to microtubules and its proteasomal degradation in neurons. This ubiquitination inhibits LRRK2 kinase activation by RAB29. This is Probable E3 ubiquitin-protein ligase MID2 (MID2) from Homo sapiens (Human).